The sequence spans 403 residues: Eukaryotic translation initiation factor 3 subunit H (403 aa).

The region spanning 57–206 (VRLDGLALTK…VKAYRLSPSF (150 aa)) is the MPN domain. The segment at 99 to 122 (ALPNPGRSNSERDEEEDRSSRNAT) is disordered.

Belongs to the eIF-3 subunit H family. As to quaternary structure, component of the eukaryotic translation initiation factor 3 (eIF-3) complex.

Its subcellular location is the cytoplasm. Its function is as follows. Component of the eukaryotic translation initiation factor 3 (eIF-3) complex, which is involved in protein synthesis of a specialized repertoire of mRNAs and, together with other initiation factors, stimulates binding of mRNA and methionyl-tRNAi to the 40S ribosome. The eIF-3 complex specifically targets and initiates translation of a subset of mRNAs involved in cell proliferation. In Mycosarcoma maydis (Corn smut fungus), this protein is Eukaryotic translation initiation factor 3 subunit H.